We begin with the raw amino-acid sequence, 55 residues long: Mannose/glucose-specific lectin alpha chain (55 aa).

The protein belongs to the leguminous lectin family. In terms of assembly, tetramer of two alpha and two beta chains.

The chain is Mannose/glucose-specific lectin alpha chain from Lathyrus sativus (White vetchling).